The sequence spans 296 residues: HVA22-like protein i (296 aa).

Residues 146-296 are disordered; it reads STPRPQPPQK…LRKTRSEESR (151 aa). Residues 180 to 193 are compositionally biased toward low complexity; the sequence is VSLSSSSSSSSSEN. Residues 223 to 233 are compositionally biased toward polar residues; that stretch reads AGTTQIAQKSV. The segment covering 251–261 has biased composition (acidic residues); it reads QIEEVEGEAES. Residues 270-281 show a composition bias toward basic and acidic residues; it reads GPKETVMEETIR.

The protein belongs to the DP1 family.

This is HVA22-like protein i (HVA22I) from Arabidopsis thaliana (Mouse-ear cress).